The sequence spans 141 residues: NADH dehydrogenase [ubiquinone] 1 alpha subcomplex subunit 11 (141 aa).

Ala2 is modified (N-acetylalanine). 2 helical membrane passes run 21 to 43 and 58 to 80; these read KAYSTTSIASVAGLTAAAYRVTL and QYTFTAAAVGAVFGLTTCISAHV.

This sequence belongs to the complex I NDUFA11 subunit family. Complex I is composed of 45 different subunits.

Its subcellular location is the mitochondrion inner membrane. In terms of biological role, accessory subunit of the mitochondrial membrane respiratory chain NADH dehydrogenase (Complex I), that is believed not to be involved in catalysis. Complex I functions in the transfer of electrons from NADH to the respiratory chain. The immediate electron acceptor for the enzyme is believed to be ubiquinone. This chain is NADH dehydrogenase [ubiquinone] 1 alpha subcomplex subunit 11 (NDUFA11), found in Homo sapiens (Human).